The following is a 78-amino-acid chain: Large ribosomal subunit protein uL29 (78 aa).

The protein belongs to the universal ribosomal protein uL29 family.

The polypeptide is Large ribosomal subunit protein uL29 (Rhodococcus opacus (strain B4)).